A 218-amino-acid polypeptide reads, in one-letter code: Pyridoxine/pyridoxamine 5'-phosphate oxidase (218 aa).

Residues 14-17 and Lys-72 each bind substrate; that span reads RREY. Residues 67-72, 82-83, Arg-88, Lys-89, and Gln-111 contribute to the FMN site; these read RIVLLK and YT. 3 residues coordinate substrate: Tyr-129, Arg-133, and Ser-137. Residues 146–147 and Trp-191 contribute to the FMN site; that span reads QS. 197 to 199 contacts substrate; sequence RLH. An FMN-binding site is contributed by Arg-201.

The protein belongs to the pyridoxamine 5'-phosphate oxidase family. Homodimer. It depends on FMN as a cofactor.

The catalysed reaction is pyridoxamine 5'-phosphate + O2 + H2O = pyridoxal 5'-phosphate + H2O2 + NH4(+). It carries out the reaction pyridoxine 5'-phosphate + O2 = pyridoxal 5'-phosphate + H2O2. It participates in cofactor metabolism; pyridoxal 5'-phosphate salvage; pyridoxal 5'-phosphate from pyridoxamine 5'-phosphate: step 1/1. It functions in the pathway cofactor metabolism; pyridoxal 5'-phosphate salvage; pyridoxal 5'-phosphate from pyridoxine 5'-phosphate: step 1/1. Functionally, catalyzes the oxidation of either pyridoxine 5'-phosphate (PNP) or pyridoxamine 5'-phosphate (PMP) into pyridoxal 5'-phosphate (PLP). This chain is Pyridoxine/pyridoxamine 5'-phosphate oxidase, found in Cronobacter sakazakii (strain ATCC BAA-894) (Enterobacter sakazakii).